A 154-amino-acid polypeptide reads, in one-letter code: MQGNQAVVDYMNELLSGELAARDQYFIHSRLYSEWGYTKLFERLNHEMEEETTHAEDFIRRILMLGGTPKMARAELNIGTDVVSCLKADLQTEYEVRDALKKGIKLCEEAQDYVSRDLMVAQLKDTEEDHAHWLEQQLRLIELIGEGNYYQSQL.

The region spanning 1–145 is the Ferritin-like diiron domain; that stretch reads MQGNQAVVDY…QQLRLIELIG (145 aa). Fe cation is bound by residues Glu-18, Glu-51, His-54, Glu-93, Glu-127, and His-130.

It belongs to the bacterioferritin family. In terms of assembly, heterooligomer of 24 subunits, arranged as 12 dimers, that are packed together to form an approximately spherical molecule with a central cavity, in which large amounts of iron can be deposited.

It catalyses the reaction 4 Fe(2+) + O2 + 4 H(+) = 4 Fe(3+) + 2 H2O. The enzyme catalyses Fe(2+)(in) = Fe(2+)(out). Iron-storage protein, whose ferroxidase center binds Fe(2+), oxidizes it using dioxygen to Fe(3+), and participates in the subsequent Fe(3+) oxide mineral core formation within the central cavity of the BFR protein shell. This is Bacterial ferritin (bfrA) from Neisseria meningitidis serogroup A / serotype 4A (strain DSM 15465 / Z2491).